The chain runs to 466 residues: Argininosuccinate lyase (466 aa).

The protein belongs to the lyase 1 family. Argininosuccinate lyase subfamily.

The protein localises to the cytoplasm. It catalyses the reaction 2-(N(omega)-L-arginino)succinate = fumarate + L-arginine. It participates in amino-acid biosynthesis; L-arginine biosynthesis; L-arginine from L-ornithine and carbamoyl phosphate: step 3/3. This is Argininosuccinate lyase from Syntrophobacter fumaroxidans (strain DSM 10017 / MPOB).